The primary structure comprises 185 residues: PXMP2/4 family protein 4 (185 aa).

Transmembrane regions (helical) follow at residues 63 to 83, 100 to 120, and 141 to 161; these read MAVF…KYLD, IDQV…MGIL, and VSDC…ISSI.

The protein belongs to the peroxisomal membrane protein PXMP2/4 family.

It is found in the membrane. The polypeptide is PXMP2/4 family protein 4 (Dictyostelium discoideum (Social amoeba)).